The primary structure comprises 115 residues: Cytochrome c oxidase assembly protein COX16 homolog, mitochondrial (115 aa).

At 1-6 the chain is on the mitochondrial matrix side; it reads MSRLKF. Residues 7–29 form a helical membrane-spanning segment; sequence VRVGLPFFAIVLGSAYGLHFFQQ. The Mitochondrial intermembrane segment spans residues 30 to 115; the sequence is VRFDFRKIKQ…RKVRELKSNV (86 aa).

It belongs to the COX16 family.

It is found in the mitochondrion inner membrane. Required for the assembly of the mitochondrial respiratory chain complex IV (CIV), also known as cytochrome c oxidase. This chain is Cytochrome c oxidase assembly protein COX16 homolog, mitochondrial, found in Caenorhabditis elegans.